We begin with the raw amino-acid sequence, 4363 residues long: AM-toxin synthetase AMT1 (4363 aa).

The tract at residues 278-670 is adenylation 1; sequence AGQAKQRPHA…GSLLYVGRKD (393 aa). One can recognise a Carrier 1 domain in the interval 810-887; it reads APDSVIARQL…ALAAIAKVIP (78 aa). An O-(pantetheine 4'-phosphoryl)serine modification is found at Ser-847. The segment at 926–1340 is condensation 1; sequence EDVYACTPLQ…TLGQIDVLTS (415 aa). The adenylation 2 stretch occupies residues 1368 to 1765; it reads KQARTRPGAI…LGRKDTQIKI (398 aa). The Carrier 2 domain maps to 1884–1961; sequence PPVTDMEKHV…DQARHVTLLT (78 aa). The residue at position 1922 (Ser-1922) is an O-(pantetheine 4'-phosphoryl)serine. The interval 1999–2410 is condensation 2; the sequence is EDVYPCTPLQ…ASPSSSTLVS (412 aa). An adenylation 3 region spans residues 2448–2853; sequence RKKALAAPQA…GRKDNQVKIR (406 aa). The region spanning 2977–3053 is the Carrier 3 domain; sequence LPSTVMEETL…DLAACCTDRR (77 aa). Position 3014 is an O-(pantetheine 4'-phosphoryl)serine (Ser-3014). The tract at residues 3098–3503 is condensation 3; that stretch reads VEDVYPCTPM…ELVSSIETLN (406 aa). The Carrier 4 domain maps to 3730–3806; it reads PAVTAMQLAI…SLAVRATENT (77 aa). O-(pantetheine 4'-phosphoryl)serine is present on Ser-3767. A condensation 4 region spans residues 3850-4204; sequence QDVLPCTSMQ…GLDEIVEHYA (355 aa).

The protein belongs to the NRP synthetase family.

Its pathway is mycotoxin biosynthesis. Functionally, nonribosomal peptide synthetase; part of the gene clusters that mediate the biosynthesis of AM-toxins, host-selective toxins (HSTs) causing Alternaria blotch on apple, a worldwide distributed disease. AM-toxins are cyclic depsipeptides containing the 3 residues 2-hydroxy-isovaleric acid (2-HIV), dehydroalanine, L-alanine which are common for all 3 AM-toxins I to III. The fourth precursor is L-alpha-amino-methoxyphenyl-valeric acid (L-Amv) for AM-toxin I, L-alpha-amino-phenyl-valeric acid (L-Apv) for AM-toxin II, and L-alpha-amino-hydroxyphenyl-valeric acid (L-Ahv) for AM-toxin III. AM-toxins have two target sites for affecting susceptible apple cells; they cause invagination of the plasma membrane and electrolyte loss, and chloroplast disorganization. The non-ribosomal peptide synthetase AMT1 contains 4 catalytic modules and is responsible for activation of each residue in AM-toxin. The aldo-keto reductase AMT2 catalyzes the conversion of 2-keto-isovaleric acid (2-KIV) to 2-hydroxy-isovaleric acid (2-HIV), one of the precursor residues incorporated by AMT1 during AM-toxin biosynthesis, by reduction of its ketone to an alcohol. The cytochrome P450 monooxygenase AMT3 and the thioesterase AMT4 are also important for AM-toxin production, but their exact function within the AM-toxin biosynthesis are not known yet. Up to 21 proteins (including AMT1 to AMT4) are predicted to be involved in AM-toxin biosynthesis since their expression ishighly up-regulated in AM-toxin-producing cultures. In Alternaria alternata (Alternaria rot fungus), this protein is AM-toxin synthetase AMT1.